The chain runs to 313 residues: Porphobilinogen deaminase (313 aa).

An S-(dipyrrolylmethanemethyl)cysteine modification is found at Cys242.

This sequence belongs to the HMBS family. Monomer. Dipyrromethane serves as cofactor.

It carries out the reaction 4 porphobilinogen + H2O = hydroxymethylbilane + 4 NH4(+). The protein operates within porphyrin-containing compound metabolism; protoporphyrin-IX biosynthesis; coproporphyrinogen-III from 5-aminolevulinate: step 2/4. Functionally, tetrapolymerization of the monopyrrole PBG into the hydroxymethylbilane pre-uroporphyrinogen in several discrete steps. This is Porphobilinogen deaminase from Yersinia pseudotuberculosis serotype O:3 (strain YPIII).